The following is a 470-amino-acid chain: Cyclic AMP receptor-like protein D (470 aa).

Over 1 to 16 the chain is Extracellular; that stretch reads MSSCSSLSMDDRVKIG. A helical membrane pass occupies residues 17 to 37; it reads YGSIAGASLSIIGSIGTIILI. Residues 38 to 123 are Cytoplasmic-facing; sequence KIRNKKQEKK…NNNQKTKVSH (86 aa). The chain crosses the membrane as a helical span at residues 124–144; that stretch reads FIINLSIANLLASIFMITIKL. At 145–176 the chain is on the extracellular side; sequence MMIHFNDKFIKVLPSTANHSFNALISVCTIGN. An N-linked (GlcNAc...) asparagine glycan is attached at N162. A disulfide bridge connects residues C172 and C287. The chain crosses the membrane as a helical span at residues 177–197; that stretch reads GVIGFSFISTFFWTLAISMYI. The Cytoplasmic portion of the chain corresponds to 198–253; it reads YQQFLSSSTINSNNNNNNINNINNNNNNNINNINNSKNNNSINNFNNSNKSNKIIK. The helical transmembrane segment at 254–274 threads the bilayer; that stretch reads MLFYFVCWVIPFVLGSILVSG. The Extracellular segment spans residues 275 to 295; the sequence is SRLIELNSDLPWCSIDSNIQL. Residues 296 to 316 form a helical membrane-spanning segment; sequence ISFYFPLIICLLATTFFTILI. Residues 317-342 lie on the Cytoplasmic side of the membrane; that stretch reads KYKFSNDKLACSSSSLINLQSKIIQR. A helical transmembrane segment spans residues 343-363; it reads LILFLIVILVCWVPSLISFFI. At 364-372 the chain is on the extracellular side; sequence SFFSKNCKQ. Residues 373–393 traverse the membrane as a helical segment; sequence FLWLEIISSTIQSCQGILNFL. Residues 394-470 are Cytoplasmic-facing; that stretch reads SYLSIFKKLK…DFDNNQIQEK (77 aa).

It belongs to the G-protein coupled receptor 5 family.

Its subcellular location is the membrane. In terms of biological role, receptor for cAMP. This is Cyclic AMP receptor-like protein D (crlD) from Dictyostelium discoideum (Social amoeba).